Here is a 269-residue protein sequence, read N- to C-terminus: Tryptophan synthase alpha chain (269 aa).

Catalysis depends on proton acceptor residues Glu-49 and Asp-60.

Belongs to the TrpA family. As to quaternary structure, tetramer of two alpha and two beta chains.

The catalysed reaction is (1S,2R)-1-C-(indol-3-yl)glycerol 3-phosphate + L-serine = D-glyceraldehyde 3-phosphate + L-tryptophan + H2O. It participates in amino-acid biosynthesis; L-tryptophan biosynthesis; L-tryptophan from chorismate: step 5/5. Its function is as follows. The alpha subunit is responsible for the aldol cleavage of indoleglycerol phosphate to indole and glyceraldehyde 3-phosphate. This Acidovorax sp. (strain JS42) protein is Tryptophan synthase alpha chain.